Reading from the N-terminus, the 880-residue chain is Valine--tRNA ligase (880 aa).

The 'HIGH' region signature appears at 49–59; it reads PNVTGKLHLGH. The 'KMSKS' region motif lies at 525–529; that stretch reads KMSKS. Lysine 528 is an ATP binding site. Residues 809–880 adopt a coiled-coil conformation; the sequence is LEGLINIEEE…VKARLAELKR (72 aa).

Belongs to the class-I aminoacyl-tRNA synthetase family. ValS type 1 subfamily. In terms of assembly, monomer.

The protein localises to the cytoplasm. The catalysed reaction is tRNA(Val) + L-valine + ATP = L-valyl-tRNA(Val) + AMP + diphosphate. Catalyzes the attachment of valine to tRNA(Val). As ValRS can inadvertently accommodate and process structurally similar amino acids such as threonine, to avoid such errors, it has a 'posttransfer' editing activity that hydrolyzes mischarged Thr-tRNA(Val) in a tRNA-dependent manner. In Geobacillus stearothermophilus (Bacillus stearothermophilus), this protein is Valine--tRNA ligase (valS).